Reading from the N-terminus, the 427-residue chain is Glutamate-1-semialdehyde 2,1-aminomutase (427 aa).

Residue Lys-264 is modified to N6-(pyridoxal phosphate)lysine.

The protein belongs to the class-III pyridoxal-phosphate-dependent aminotransferase family. HemL subfamily. In terms of assembly, homodimer. The cofactor is pyridoxal 5'-phosphate.

It is found in the cytoplasm. The catalysed reaction is (S)-4-amino-5-oxopentanoate = 5-aminolevulinate. The protein operates within porphyrin-containing compound metabolism; protoporphyrin-IX biosynthesis; 5-aminolevulinate from L-glutamyl-tRNA(Glu): step 2/2. The chain is Glutamate-1-semialdehyde 2,1-aminomutase from Clostridium botulinum (strain Alaska E43 / Type E3).